Here is a 372-residue protein sequence, read N- to C-terminus: Tryptophan--tRNA ligase (372 aa).

A 'HIGH' region motif is present at residues 79–87; that stretch reads PSGKFHFGH. Positions 247-268 are disordered; it reads KLQPGLDGRKMSSSRPDSTIFL. Positions 256–260 match the 'KMSKS' region motif; that stretch reads KMSSS. The segment covering 257 to 267 has biased composition (polar residues); it reads MSSSRPDSTIF.

Belongs to the class-I aminoacyl-tRNA synthetase family.

The protein localises to the cytoplasm. The enzyme catalyses tRNA(Trp) + L-tryptophan + ATP = L-tryptophyl-tRNA(Trp) + AMP + diphosphate + H(+). The polypeptide is Tryptophan--tRNA ligase (Aeropyrum pernix (strain ATCC 700893 / DSM 11879 / JCM 9820 / NBRC 100138 / K1)).